The sequence spans 550 residues: Transcription factor p65 (550 aa).

N-acetylmethionine is present on Met-1. Positions 16-190 (ASGPYVEIIE…HPIFDNRAPN (175 aa)) constitute an RHD domain. Residue Lys-37 forms a Glycyl lysine isopeptide (Lys-Gly) (interchain with G-Cter in SUMO3) linkage. Cys-38 carries the cysteine persulfide; alternate modification. Cys-38 carries the post-translational modification S-nitrosocysteine; alternate. N6-acetyllysine is present on residues Lys-122, Lys-123, Lys-218, and Lys-221. Glycyl lysine isopeptide (Lys-Gly) (interchain with G-Cter in SUMO3); alternate cross-links involve residues Lys-122 and Lys-123. Thr-254 is modified (phosphothreonine). Phosphoserine occurs at positions 276 and 281. Residues 301-304 (KRKR) carry the Nuclear localization signal motif. Lys-310 bears the N6-acetyllysine; alternate mark. Lys-310 carries the post-translational modification N6-methyllysine. Residue Ser-311 is modified to Phosphoserine. 2 transcriptional activation domain regions span residues 342–388 (PKPA…APVL) and 414–476 (PGPP…EFQQ). Position 434 is a phosphothreonine (Thr-434). The residue at position 468 (Ser-468) is a Phosphoserine. Thr-505 is modified (phosphothreonine). The interval 520–550 (TSGLPNGLSGDEDFSSIADMDFSALLSQISS) is transcriptional activation domain 2. Ser-535 is modified (phosphoserine). The short motif at 535 to 543 (SIADMDFSA) is the 9aaTAD element.

Component of the NF-kappa-B p65-p50 complex. Component of the NF-kappa-B p65-c-Rel complex. Homodimer; component of the NF-kappa-B p65-p65 complex. Component of the NF-kappa-B p65-p52 complex. May interact with ETHE1. Binds TLE5 and TLE1. Interacts with TP53BP2. Binds to and is phosphorylated by the activated form of either RPS6KA4 or RPS6KA5. Interacts with ING4 and this interaction may be indirect. Interacts with CARM1, USP48 and UNC5CL. Interacts with IRAK1BP1. Interacts with NFKBID. Interacts with NFKBIA. Interacts with GSK3B. Interacts with NFKBIB. Interacts with NFKBIE. Interacts with NFKBIZ. Interacts with EHMT1 (via ANK repeats). Part of a 70-90 kDa complex at least consisting of CHUK, IKBKB, NFKBIA, RELA, ELP1 and MAP3K14. Interacts with HDAC3; HDAC3 mediates the deacetylation of RELA. Interacts with HDAC1; the interaction requires non-phosphorylated RELA. Interacts with CBP; the interaction requires phosphorylated RELA. Interacts (phosphorylated at 'Thr-254') with PIN1; the interaction inhibits p65 binding to NFKBIA. Interacts with SOCS1. Interacts with UXT. Interacts with MTDH and PHF11. Interacts with ARRB2. Interacts with NFKBIA (when phosphorylated), the interaction is direct; phosphorylated NFKBIA is part of a SCF(BTRC)-like complex lacking CUL1. Interacts with RNF25. Interacts (via C-terminus) with DDX1. Interacts with UFL1 and COMMD1. Interacts with BRMS1; this promotes deacetylation of 'Lys-310'. Interacts with NOTCH2. Directly interacts with MEN1; this interaction represses NFKB-mediated transactivation. Interacts with AKIP1, which promotes the phosphorylation and nuclear retention of RELA. Interacts (via the RHD) with GFI1; the interaction, after bacterial lipopolysaccharide (LPS) stimulation, inhibits the transcriptional activity by interfering with the DNA-binding activity to target gene promoter DNA. Interacts (when acetylated at Lys-310) with BRD4; leading to activation of the NF-kappa-B pathway. Interacts with MEFV. Interacts with CLOCK. Interacts (via N-terminus) with CPEN1; this interaction induces proteolytic cleavage of p65/RELA subunit and inhibition of NF-kappa-B transcriptional activity. Interacts with FOXP3. Interacts with CDK5RAP3; stimulates the interaction of RELA with HDAC1, HDAC2 and HDAC3 thereby inhibiting NF-kappa-B transcriptional activity. Interacts with DHX9; this interaction is direct and activates NF-kappa-B-mediated transcription. Interacts with LRRC25. Interacts with TBX21. Interacts with KAT2A. Interacts with ZBTB7A; involved in the control by RELA of the accessibility of target gene promoters. Directly interacts with DDX3X; this interaction may trap RELA in the cytoplasm, impairing nuclear relocalization upon TNF activating signals. Interacts with PHF2. Interacts with MKRN2; the interaction leads to its polyubiquitination and proteasome-dependent degradation. Interacts with ECSIT. Interacts with RAB28; the interaction contributes to RELA transport from cytoplasm to nucleus. Ubiquitinated by RNF182, leading to its proteasomal degradation. Degradation is required for termination of NF-kappa-B response. Polyubiquitinated via 'Lys-29'-linked ubiquitin; leading to lysosomal degradation. Post-translationally, monomethylated at Lys-310 by SETD6. Monomethylation at Lys-310 is recognized by the ANK repeats of EHMT1 and promotes the formation of repressed chromatin at target genes, leading to down-regulation of NF-kappa-B transcription factor activity. Phosphorylation at Ser-311 disrupts the interaction with EHMT1 without preventing monomethylation at Lys-310 and relieves the repression of target genes. In terms of processing, phosphorylation at Ser-311 disrupts the interaction with EHMT1 and promotes transcription factor activity. Phosphorylation on Ser-535 stimulates acetylation on Lys-310 and interaction with CBP; the phosphorylated and acetylated forms show enhanced transcriptional activity. Phosphorylation at Ser-276 by RPS6KA4 and RPS6KA5 promotes its transactivation and transcriptional activities. Phosphorylation at Ser-75 by herpes simplex virus 1/HHV-1 inhibits NF-kappa-B activation. Post-translationally, reversibly acetylated; the acetylation seems to be mediated by CBP, the deacetylation by HDAC3 and SIRT2. Acetylation at Lys-122 enhances DNA binding and impairs association with NFKBIA. Acetylation at Lys-310 is required for full transcriptional activity in the absence of effects on DNA binding and NFKBIA association. Acetylation at Lys-310 promotes interaction with BRD4. Acetylation can also lower DNA-binding and results in nuclear export. Interaction with BRMS1 promotes deacetylation of Lys-310. Lys-310 is deacetylated by SIRT2. In terms of processing, S-nitrosylation of Cys-38 inactivates the enzyme activity. Sulfhydration at Cys-38 mediates the anti-apoptotic activity by promoting the interaction with RPS3 and activating the transcription factor activity. Post-translationally, sumoylation by PIAS3 negatively regulates DNA-bound activated NF-kappa-B. In terms of processing, proteolytically cleaved within a conserved N-terminus region required for base-specific contact with DNA in a CPEN1-mediated manner, and hence inhibits NF-kappa-B transcriptional activity.

Its subcellular location is the nucleus. The protein resides in the cytoplasm. Functionally, NF-kappa-B is a pleiotropic transcription factor present in almost all cell types and is the endpoint of a series of signal transduction events that are initiated by a vast array of stimuli related to many biological processes such as inflammation, immunity, differentiation, cell growth, tumorigenesis and apoptosis. NF-kappa-B is a homo- or heterodimeric complex formed by the Rel-like domain-containing proteins RELA/p65, RELB, NFKB1/p105, NFKB1/p50, REL and NFKB2/p52. The heterodimeric RELA-NFKB1 complex appears to be most abundant one. The dimers bind at kappa-B sites in the DNA of their target genes and the individual dimers have distinct preferences for different kappa-B sites that they can bind with distinguishable affinity and specificity. Different dimer combinations act as transcriptional activators or repressors, respectively. The NF-kappa-B heterodimeric RELA-NFKB1 and RELA-REL complexes, for instance, function as transcriptional activators. NF-kappa-B is controlled by various mechanisms of post-translational modification and subcellular compartmentalization as well as by interactions with other cofactors or corepressors. NF-kappa-B complexes are held in the cytoplasm in an inactive state complexed with members of the NF-kappa-B inhibitor (I-kappa-B) family. In a conventional activation pathway, I-kappa-B is phosphorylated by I-kappa-B kinases (IKKs) in response to different activators, subsequently degraded thus liberating the active NF-kappa-B complex which translocates to the nucleus. The inhibitory effect of I-kappa-B on NF-kappa-B through retention in the cytoplasm is exerted primarily through the interaction with RELA. RELA shows a weak DNA-binding site which could contribute directly to DNA binding in the NF-kappa-B complex. Besides its activity as a direct transcriptional activator, it is also able to modulate promoters accessibility to transcription factors and thereby indirectly regulate gene expression. Associates with chromatin at the NF-kappa-B promoter region via association with DDX1. Essential for cytokine gene expression in T-cells. The NF-kappa-B homodimeric RELA-RELA complex appears to be involved in invasin-mediated activation of IL-8 expression. Key transcription factor regulating the IFN response during SARS-CoV-2 infection. In Rattus norvegicus (Rat), this protein is Transcription factor p65.